A 215-amino-acid chain; its full sequence is 3,4-dihydroxy-2-butanone 4-phosphate synthase (215 aa).

Residues 38-39 (RE), D43, 151-155 (RRGHT), and E175 contribute to the D-ribulose 5-phosphate site. E39 is a Mg(2+) binding site. Residue H154 coordinates Mg(2+).

The protein belongs to the DHBP synthase family. As to quaternary structure, homodimer. Mg(2+) serves as cofactor. Mn(2+) is required as a cofactor.

It carries out the reaction D-ribulose 5-phosphate = (2S)-2-hydroxy-3-oxobutyl phosphate + formate + H(+). It functions in the pathway cofactor biosynthesis; riboflavin biosynthesis; 2-hydroxy-3-oxobutyl phosphate from D-ribulose 5-phosphate: step 1/1. Its function is as follows. Catalyzes the conversion of D-ribulose 5-phosphate to formate and 3,4-dihydroxy-2-butanone 4-phosphate. This is 3,4-dihydroxy-2-butanone 4-phosphate synthase from Haemophilus influenzae (strain PittGG).